A 462-amino-acid chain; its full sequence is Argininosuccinate lyase (462 aa).

It belongs to the lyase 1 family. Argininosuccinate lyase subfamily.

Its subcellular location is the cytoplasm. It catalyses the reaction 2-(N(omega)-L-arginino)succinate = fumarate + L-arginine. The protein operates within amino-acid biosynthesis; L-arginine biosynthesis; L-arginine from L-ornithine and carbamoyl phosphate: step 3/3. In Bacillus cytotoxicus (strain DSM 22905 / CIP 110041 / 391-98 / NVH 391-98), this protein is Argininosuccinate lyase.